Here is a 340-residue protein sequence, read N- to C-terminus: MTENALLLLNLGSPDSTRVEDVRRYLDQFLMDPYVVDLPWPLRRLLVSLILIKRPAESAHAYSSIWWDEGSPLIVLSRRLQEAMKPHWPHGPVELAMRYGQPAIEKVLLDLARRGIRRVTLAPLYPQFADSTTTTAEQEVRRVIAAHRLGLEVSTLPPFYDQPVYLDALVESVRPYLQQPHDHLLLSFHGLPERHIRKLVKDPAHDLLAENSRNVSPEALALCYRSQCLRTAEAFAERAGLEQGRWSVSFQSRLGRAKWIEPYTDAKLDELVQRGVKRLLVMCPAFVADCIETLEEIGMRGREQFISAGGEDLVLIPCLNDHPAWVGALAEMSGRLARPL.

Positions 189 and 292 each coordinate Fe cation.

The protein belongs to the ferrochelatase family.

It localises to the cytoplasm. It catalyses the reaction heme b + 2 H(+) = protoporphyrin IX + Fe(2+). The protein operates within porphyrin-containing compound metabolism; protoheme biosynthesis; protoheme from protoporphyrin-IX: step 1/1. Functionally, catalyzes the ferrous insertion into protoporphyrin IX. The sequence is that of Ferrochelatase from Pseudomonas aeruginosa (strain LESB58).